The primary structure comprises 654 residues: ATP-dependent rRNA helicase spb-4 (654 aa).

Residues 17-45 (WDALTPPLAQWILDYLSSMGFTQPTPVQK) carry the Q motif motif. The region spanning 48 to 249 (LELFRGNKDV…TVGLLYPHKI (202 aa)) is the Helicase ATP-binding domain. 61-68 (AVTGSGKT) is an ATP binding site. Positions 197 to 200 (DEAD) match the DEAD box motif. Residues 286-444 (AIVQLLEKLE…VTPDEVERVS (159 aa)) enclose the Helicase C-terminal domain. Positions 531–631 (REKKRQEELA…EERAAALAAN (101 aa)) form a coiled coil. A compositionally biased stretch (basic and acidic residues) spans 542-577 (WKEEKAKRAQEENTGDKRKKNEAWSGKAEQEETKLQ). The segment at 542–654 (WKEEKAKRAQ…SDEEFGGFDD (113 aa)) is disordered. A compositionally biased stretch (basic residues) spans 578–588 (RREKKRRKREA). Residues 589–625 (KKFSEMTEKEKEEHLKLEQMIEEVRKRNEAKAAEERA) show a composition bias toward basic and acidic residues. Over residues 644–654 (DSDEEFGGFDD) the composition is skewed to acidic residues.

It belongs to the DEAD box helicase family. DDX55/SPB4 subfamily. Component of pre-60S ribosomal complexes.

Its subcellular location is the nucleus. It localises to the nucleolus. It catalyses the reaction ATP + H2O = ADP + phosphate + H(+). ATP-binding RNA helicase involved in the biogenesis of 60S ribosomal subunits. Binds 90S pre-ribosomal particles and dissociates from pre-60S ribosomal particles after processing of 27SB pre-rRNA. Required for the normal formation of 18S rRNA through the processing of pre-rRNAs at sites A0, A1 and A2, and the normal formation of 25S and 5.8S rRNAs through the processing of pre-rRNAs at sites C1 and C2. In Neurospora crassa (strain ATCC 24698 / 74-OR23-1A / CBS 708.71 / DSM 1257 / FGSC 987), this protein is ATP-dependent rRNA helicase spb-4.